The following is a 505-amino-acid chain: Tyrosine-protein kinase FRK (505 aa).

2 positions are modified to phosphoserine: serine 37 and serine 40. The 69-residue stretch at 42 to 110 (RHGHYFVALF…PSNYVAEDRS (69 aa)) folds into the SH3 domain. An SH2 domain is found at 116–208 (WFFGAIGRSD…GLCVKLGKPC (93 aa)). Phosphothreonine is present on threonine 178. The region spanning 234-491 (IQLLKRLGSG…TLRWKLEDYF (258 aa)) is the Protein kinase domain. ATP is bound by residues 240–248 (LGSGQFGEV) and lysine 262. Aspartate 354 acts as the Proton acceptor in catalysis. Phosphotyrosine; by autocatalysis is present on tyrosine 387.

This sequence belongs to the protein kinase superfamily. Tyr protein kinase family. SRC subfamily. In terms of assembly, interacts (via the SH3-domain) with PTEN. Interacts with RB1. Predominantly expressed in epithelial derived cell lines and tissues, especially normal liver, kidney, breast and colon.

The protein localises to the cytoplasm. It is found in the nucleus. It carries out the reaction L-tyrosyl-[protein] + ATP = O-phospho-L-tyrosyl-[protein] + ADP + H(+). Functionally, non-receptor tyrosine-protein kinase that negatively regulates cell proliferation. Positively regulates PTEN protein stability through phosphorylation of PTEN on 'Tyr-336', which in turn prevents its ubiquitination and degradation, possibly by reducing its binding to NEDD4. May function as a tumor suppressor. This chain is Tyrosine-protein kinase FRK (FRK), found in Homo sapiens (Human).